The following is a 474-amino-acid chain: Siroheme synthase (474 aa).

The tract at residues 1–203 (MDYLPIFLKL…GRAEDAERVL (203 aa)) is precorrin-2 dehydrogenase /sirohydrochlorin ferrochelatase. Residues 22–23 (EV) and 43–44 (AS) contribute to the NAD(+) site. The tract at residues 219-474 (GSVALVGAGP…QETEGRSGNG (256 aa)) is uroporphyrinogen-III C-methyltransferase. Proline 228 contributes to the S-adenosyl-L-methionine binding site. The active-site Proton acceptor is the aspartate 251. Catalysis depends on lysine 273, which acts as the Proton donor. S-adenosyl-L-methionine-binding positions include 304 to 306 (GGD), isoleucine 309, 334 to 335 (TA), methionine 387, and glycine 416.

This sequence in the N-terminal section; belongs to the precorrin-2 dehydrogenase / sirohydrochlorin ferrochelatase family. In the C-terminal section; belongs to the precorrin methyltransferase family.

The catalysed reaction is uroporphyrinogen III + 2 S-adenosyl-L-methionine = precorrin-2 + 2 S-adenosyl-L-homocysteine + H(+). It carries out the reaction precorrin-2 + NAD(+) = sirohydrochlorin + NADH + 2 H(+). It catalyses the reaction siroheme + 2 H(+) = sirohydrochlorin + Fe(2+). It functions in the pathway cofactor biosynthesis; adenosylcobalamin biosynthesis; precorrin-2 from uroporphyrinogen III: step 1/1. It participates in cofactor biosynthesis; adenosylcobalamin biosynthesis; sirohydrochlorin from precorrin-2: step 1/1. The protein operates within porphyrin-containing compound metabolism; siroheme biosynthesis; precorrin-2 from uroporphyrinogen III: step 1/1. Its pathway is porphyrin-containing compound metabolism; siroheme biosynthesis; siroheme from sirohydrochlorin: step 1/1. It functions in the pathway porphyrin-containing compound metabolism; siroheme biosynthesis; sirohydrochlorin from precorrin-2: step 1/1. Its function is as follows. Multifunctional enzyme that catalyzes the SAM-dependent methylations of uroporphyrinogen III at position C-2 and C-7 to form precorrin-2 via precorrin-1. Then it catalyzes the NAD-dependent ring dehydrogenation of precorrin-2 to yield sirohydrochlorin. Finally, it catalyzes the ferrochelation of sirohydrochlorin to yield siroheme. The protein is Siroheme synthase of Methylococcus capsulatus (strain ATCC 33009 / NCIMB 11132 / Bath).